The sequence spans 547 residues: CTP synthase (547 aa).

Residues 1–265 form an amidoligase domain region; the sequence is MARYVFITGG…DQAVLDAFGI (265 aa). Residue Ser-13 participates in CTP binding. Ser-13 contacts UTP. Residues 14–19 and Asp-71 each bind ATP; that span reads SLGKGL. Positions 71 and 139 each coordinate Mg(2+). Residues 146–148, 186–191, and Lys-222 contribute to the CTP site; these read DIE and KTKPTQ. Residues 186–191 and Lys-222 contribute to the UTP site; that span reads KTKPTQ. In terms of domain architecture, Glutamine amidotransferase type-1 spans 291–546; sequence RVAIVGKYTQ…VRAAVEVSRL (256 aa). Gly-353 provides a ligand contact to L-glutamine. Cys-380 (nucleophile; for glutamine hydrolysis) is an active-site residue. L-glutamine contacts are provided by residues 381 to 384, Glu-404, and Arg-474; that span reads LGMQ. Catalysis depends on residues His-519 and Glu-521.

It belongs to the CTP synthase family. In terms of assembly, homotetramer.

It catalyses the reaction UTP + L-glutamine + ATP + H2O = CTP + L-glutamate + ADP + phosphate + 2 H(+). The catalysed reaction is L-glutamine + H2O = L-glutamate + NH4(+). It carries out the reaction UTP + NH4(+) + ATP = CTP + ADP + phosphate + 2 H(+). It participates in pyrimidine metabolism; CTP biosynthesis via de novo pathway; CTP from UDP: step 2/2. Allosterically activated by GTP, when glutamine is the substrate; GTP has no effect on the reaction when ammonia is the substrate. The allosteric effector GTP functions by stabilizing the protein conformation that binds the tetrahedral intermediate(s) formed during glutamine hydrolysis. Inhibited by the product CTP, via allosteric rather than competitive inhibition. In terms of biological role, catalyzes the ATP-dependent amination of UTP to CTP with either L-glutamine or ammonia as the source of nitrogen. Regulates intracellular CTP levels through interactions with the four ribonucleotide triphosphates. The protein is CTP synthase of Cereibacter sphaeroides (strain ATCC 17029 / ATH 2.4.9) (Rhodobacter sphaeroides).